The following is a 533-amino-acid chain: Bifunctional purine biosynthesis protein PurH (533 aa).

The MGS-like domain occupies 1-148 (MDTPRPIKRA…KNHKDVTIVV (148 aa)).

This sequence belongs to the PurH family.

The enzyme catalyses (6R)-10-formyltetrahydrofolate + 5-amino-1-(5-phospho-beta-D-ribosyl)imidazole-4-carboxamide = 5-formamido-1-(5-phospho-D-ribosyl)imidazole-4-carboxamide + (6S)-5,6,7,8-tetrahydrofolate. It carries out the reaction IMP + H2O = 5-formamido-1-(5-phospho-D-ribosyl)imidazole-4-carboxamide. The protein operates within purine metabolism; IMP biosynthesis via de novo pathway; 5-formamido-1-(5-phospho-D-ribosyl)imidazole-4-carboxamide from 5-amino-1-(5-phospho-D-ribosyl)imidazole-4-carboxamide (10-formyl THF route): step 1/1. It participates in purine metabolism; IMP biosynthesis via de novo pathway; IMP from 5-formamido-1-(5-phospho-D-ribosyl)imidazole-4-carboxamide: step 1/1. The sequence is that of Bifunctional purine biosynthesis protein PurH from Colwellia psychrerythraea (strain 34H / ATCC BAA-681) (Vibrio psychroerythus).